Consider the following 376-residue polypeptide: Queuine tRNA-ribosyltransferase (376 aa).

The active-site Proton acceptor is D89. Residues 89–93 (DSGGF), D143, Q194, and G221 contribute to the substrate site. The segment at 252 to 258 (GVGIPSN) is RNA binding. Catalysis depends on D271, which acts as the Nucleophile. Residues 276–280 (ARNGR) form an RNA binding; important for wobble base 34 recognition region. The Zn(2+) site is built by C309, C311, C314, and H340.

This sequence belongs to the queuine tRNA-ribosyltransferase family. As to quaternary structure, homodimer. Within each dimer, one monomer is responsible for RNA recognition and catalysis, while the other monomer binds to the replacement base PreQ1. The cofactor is Zn(2+).

It carries out the reaction 7-aminomethyl-7-carbaguanine + guanosine(34) in tRNA = 7-aminomethyl-7-carbaguanosine(34) in tRNA + guanine. It participates in tRNA modification; tRNA-queuosine biosynthesis. Its function is as follows. Catalyzes the base-exchange of a guanine (G) residue with the queuine precursor 7-aminomethyl-7-deazaguanine (PreQ1) at position 34 (anticodon wobble position) in tRNAs with GU(N) anticodons (tRNA-Asp, -Asn, -His and -Tyr). Catalysis occurs through a double-displacement mechanism. The nucleophile active site attacks the C1' of nucleotide 34 to detach the guanine base from the RNA, forming a covalent enzyme-RNA intermediate. The proton acceptor active site deprotonates the incoming PreQ1, allowing a nucleophilic attack on the C1' of the ribose to form the product. After dissociation, two additional enzymatic reactions on the tRNA convert PreQ1 to queuine (Q), resulting in the hypermodified nucleoside queuosine (7-(((4,5-cis-dihydroxy-2-cyclopenten-1-yl)amino)methyl)-7-deazaguanosine). In Clostridium botulinum (strain Kyoto / Type A2), this protein is Queuine tRNA-ribosyltransferase.